A 255-amino-acid chain; its full sequence is tRNA (guanine-N(1)-)-methyltransferase (255 aa).

S-adenosyl-L-methionine-binding positions include G113 and 133–138; that span reads IGDYVL.

It belongs to the RNA methyltransferase TrmD family. Homodimer.

The protein resides in the cytoplasm. The catalysed reaction is guanosine(37) in tRNA + S-adenosyl-L-methionine = N(1)-methylguanosine(37) in tRNA + S-adenosyl-L-homocysteine + H(+). Its function is as follows. Specifically methylates guanosine-37 in various tRNAs. The protein is tRNA (guanine-N(1)-)-methyltransferase of Mannheimia succiniciproducens (strain KCTC 0769BP / MBEL55E).